The following is a 289-amino-acid chain: tRNA (adenine(58)-N(1))-methyltransferase catalytic subunit TRMT61A (289 aa).

Position 2 is an N-acetylserine (serine 2). Substrate-binding positions include 20 to 22 (LGH), 35 to 42 (QTQTRHGV), 64 to 65 (GW), 85 to 89 (QILYS), and 110 to 117 (SGTGSGSV). S-adenosyl-L-methionine is bound by residues leucine 87, 114–116 (SGS), glutamate 135, arginine 140, 163–164 (DV), and aspartate 181. Substrate is bound by residues 180–183 (LDIP) and 205–212 (SFSPCIEQ). The interval 245–272 (LPPPDLGTGTDGPAGSDTSPFRSGTPMK) is disordered. The span at 250–259 (LGTGTDGPAG) shows a compositional bias: low complexity. Residue serine 263 is modified to Phosphoserine. Position 278 (threonine 278) interacts with substrate.

This sequence belongs to the class I-like SAM-binding methyltransferase superfamily. TRM61 family. As to quaternary structure, heterotetramer; composed of two copies of TRMT6 and two copies of TRMT61A.

The protein resides in the nucleus. The catalysed reaction is adenosine(58) in tRNA + S-adenosyl-L-methionine = N(1)-methyladenosine(58) in tRNA + S-adenosyl-L-homocysteine + H(+). The enzyme catalyses an adenosine in mRNA + S-adenosyl-L-methionine = an N(1)-methyladenosine in mRNA + S-adenosyl-L-homocysteine + H(+). Functionally, catalytic subunit of tRNA (adenine-N(1)-)-methyltransferase, which catalyzes the formation of N(1)-methyladenine at position 58 (m1A58) in initiator methionyl-tRNA. Catalytic subunit of mRNA N(1)-methyltransferase complex, which mediates methylation of adenosine residues at the N(1) position of a small subset of mRNAs: N(1) methylation takes place in tRNA T-loop-like structures of mRNAs and is only present at low stoichiometries. This is tRNA (adenine(58)-N(1))-methyltransferase catalytic subunit TRMT61A (TRMT61A) from Homo sapiens (Human).